Here is a 102-residue protein sequence, read N- to C-terminus: Small ribosomal subunit protein uS10 (102 aa).

It belongs to the universal ribosomal protein uS10 family. As to quaternary structure, part of the 30S ribosomal subunit.

In terms of biological role, involved in the binding of tRNA to the ribosomes. In Parvibaculum lavamentivorans (strain DS-1 / DSM 13023 / NCIMB 13966), this protein is Small ribosomal subunit protein uS10.